A 361-amino-acid chain; its full sequence is Protein Csal_2339 (361 aa).

The Proton acceptor role is filled by S91. Substrate is bound by residues 92 to 93 (GS) and 259 to 260 (GT).

It belongs to the proline racemase family.

The enzyme catalyses trans-4-hydroxy-L-proline = cis-4-hydroxy-D-proline. In terms of biological role, in vitro, catalyzes the epimerization of trans-4-hydroxy-L-proline (t4LHyp) to cis-4-hydroxy-D-proline (c4DHyp), albeit with very low efficiency. The physiological substrate may be different. Displays neither proline racemase activity nor t3LHyp dehydratase activity. The polypeptide is Protein Csal_2339 (Chromohalobacter salexigens (strain ATCC BAA-138 / DSM 3043 / CIP 106854 / NCIMB 13768 / 1H11)).